We begin with the raw amino-acid sequence, 421 residues long: MSARAGIIVTGTEVLTGRVQDRNGPWIADRLLELGVELAHITICGDRPADIEAQLRFLAAEGVDLIVTSGGLGPTADDLTVATVARFCGRELILDTELEQRIADILRRLMGRRTDVDFDALRAANRKQAMVPDGATVLEPVGTAPGVVVPGSPTVLVLPGPPRELQPMWRTAVQTEALRSAIAGRTEYRQDMVRMFGLPESGLAETLRDAERDLAGFDRLEITTCLRRGELEIVTRYEPDAEPVYRNLLTLLRDRHGSAIFSEDGSLVDDQVAALLAGHTIATAESCTGGMLSARLTERAGSSAYVAGAAVCYADAAKVELLGVPADLIADHGAVSEPVAEAMADGALRRFGADVAVAITGIAGPGGGTELKPVGTVCFCVRRADGRVVTRTVRLPGDRSDVRERSTTVAMHLLRRALQDG.

It belongs to the CinA family.

The polypeptide is CinA-like protein (Mycobacterium sp. (strain JLS)).